The chain runs to 214 residues: Heat shock protein 26 (214 aa).

Ser-2 carries the N-acetylserine modification. Thr-42 carries the post-translational modification Phosphothreonine. In terms of domain architecture, sHSP spans 86 to 207 (GFPRSVAVPV…KNHVKKIEVS (122 aa)). Residue Ser-90 is modified to Phosphoserine. Position 163 is a phosphothreonine (Thr-163). The disordered stretch occupies residues 192–214 (KPQKDGKNHVKKIEVSSQESWGN). Basic and acidic residues predominate over residues 193-205 (PQKDGKNHVKKIE). Ser-208 and Ser-211 each carry phosphoserine.

The protein belongs to the small heat shock protein (HSP20) family. In terms of assembly, present in large complexes.

In terms of biological role, not known. One of the major polypeptides produced on heat shock. The chain is Heat shock protein 26 (HSP26) from Saccharomyces cerevisiae (strain ATCC 204508 / S288c) (Baker's yeast).